Consider the following 683-residue polypeptide: Hexamerin 70b (683 aa).

Residues 1-21 (MIVIMKAGFLFLASLCLLVQA) form the signal peptide. The region spanning 32–153 (VTRQKNIYEL…VAVIHRPDTK (122 aa)) is the Hemocyanin N-terminal domain. A Hemocyanin middle domain is found at 159-428 (PMYEVMPHLY…SIYKTILDYY (270 aa)). Asparagine 203 is a glycosylation site (N-linked (GlcNAc...) asparagine). The 237-residue stretch at 437–673 (KYTTEELNFP…IHVKEVLVHH (237 aa)) folds into the Hemocyanin C-terminal domain.

This sequence belongs to the hemocyanin/hexamerin family. As to quaternary structure, probable homohexamer. In terms of tissue distribution, expressed in the fat body and secreted into the hemolymph (at protein level). Present in trophocytes and oenocytes of the fat body (at protein level).

The protein localises to the secreted. Its subcellular location is the nucleus. It localises to the cytoplasm. The protein resides in the cytoplasmic granule. In terms of biological role, storage protein that may function as a nutrient supply to compensate for lack of dietary proteins during metamorphosis and egg production. In Apis mellifera (Honeybee), this protein is Hexamerin 70b.